The chain runs to 325 residues: Tetraacyldisaccharide 4'-kinase (325 aa).

55–62 (TAGGNGKT) serves as a coordination point for ATP.

Belongs to the LpxK family.

The catalysed reaction is a lipid A disaccharide + ATP = a lipid IVA + ADP + H(+). It participates in glycolipid biosynthesis; lipid IV(A) biosynthesis; lipid IV(A) from (3R)-3-hydroxytetradecanoyl-[acyl-carrier-protein] and UDP-N-acetyl-alpha-D-glucosamine: step 6/6. Its function is as follows. Transfers the gamma-phosphate of ATP to the 4'-position of a tetraacyldisaccharide 1-phosphate intermediate (termed DS-1-P) to form tetraacyldisaccharide 1,4'-bis-phosphate (lipid IVA). The polypeptide is Tetraacyldisaccharide 4'-kinase (Salmonella newport (strain SL254)).